We begin with the raw amino-acid sequence, 372 residues long: sn-glycerol-3-phosphate import ATP-binding protein UgpC (372 aa).

Residues 2–233 (LDIKQLVKTY…PASTFVASFI (232 aa)) enclose the ABC transporter domain. ATP is bound at residue 35 to 42 (GPSGCGKS).

It belongs to the ABC transporter superfamily. sn-glycerol-3-phosphate importer (TC 3.A.1.1.3) family. The complex is composed of two ATP-binding proteins (UgpC), two transmembrane proteins (UgpA and UgpE) and a solute-binding protein (UgpB).

It is found in the cell inner membrane. It carries out the reaction sn-glycerol 3-phosphate(out) + ATP + H2O = sn-glycerol 3-phosphate(in) + ADP + phosphate + H(+). Functionally, part of the ABC transporter complex UgpBAEC involved in sn-glycerol-3-phosphate (G3P) import. Responsible for energy coupling to the transport system. The chain is sn-glycerol-3-phosphate import ATP-binding protein UgpC from Vibrio cholerae serotype O1 (strain ATCC 39315 / El Tor Inaba N16961).